The sequence spans 572 residues: MSDLREINRLNKDEEFEYFKLYSNSNGFRKWNLDEHNIFSKASLEYNFLKPDQMIEILKLVNQHNSNTSCKARTLEELNIHIKVYQNFLNKQQALRSPTTGSLNISGFGNPITSGGGGLGVLGGGGGGGGISSSSLGGLSGSGLFLNTMVNNTFQTILDSLDGNSSNNNNNNIPSTSSVKDVVSIGINPLFQKSVQSQSQLPTATNNNNKQPLELISKPIPTATATATTTATTTTTTIQPPIGGTKNTVNKEIEQDSNDNDNNNNTNNNNNNNNNNNNNNNNEEKEKQYLNYINNSLGELNKKDLKLLNEPWTVEDQKKLEDALTKYPPSRFSSVSRWQMVSKELGISPKAVALRYNQMLNQLIPKKPSLQQQQQQQQQQQQQPTTTTTTTTKPEQSIKSEEEEQTTGKRKSRSSFSSPSSSSKESPNKKEKTTHDTTTTTNTATTTTVTPNMTTPSIINSSPAIAANLLEADSLLQKNNQLLKQIRTSVMQLTDPQSTILTEVIENINNSIQLTGKWKDNIEMPPLPLKVNDLILSLISNNTSSSFKKPLSKKVTEWNLVVEDDAPTQDKK.

A compositionally biased stretch (polar residues) spans 196–211; the sequence is QSQSQLPTATNNNNKQ. The tract at residues 196-283 is disordered; the sequence is QSQSQLPTAT…NNNNNNNNNE (88 aa). Composition is skewed to low complexity over residues 222-237 and 260-281; these read TATATATTTATTTTTT and NDNNNNTNNNNNNNNNNNNNNN. The 50-residue stretch at 311 to 360 folds into the Myb-like domain; the sequence is PWTVEDQKKLEDALTKYPPSRFSSVSRWQMVSKELGISPKAVALRYNQML. Residues 367-456 form a disordered region; that stretch reads KPSLQQQQQQ…TTVTPNMTTP (90 aa). Low complexity-rich tracts occupy residues 371–392 and 414–425; these read QQQQQQQQQQQQQPTTTTTTTT and SSFSSPSSSSKE. The segment covering 426-435 has biased composition (basic and acidic residues); sequence SPNKKEKTTH. Residues 436–455 are compositionally biased toward low complexity; the sequence is DTTTTTNTATTTTVTPNMTT.

The chain is Myb-like protein Y (mybY) from Dictyostelium discoideum (Social amoeba).